The following is a 986-amino-acid chain: Ephrin type-A receptor 4-A (986 aa).

Positions 1-20 (MAGIVHGILFCGLFGLCWAV) are cleaved as a signal peptide. Residues 21-547 (TGSRIYPASE…MIGEGASPTV (527 aa)) are Extracellular-facing. An Eph LBD domain is found at 30–209 (EVTLLDSRSV…FYKKCPLTVR (180 aa)). 2 Fibronectin type-III domains span residues 328–438 (PPSA…TNQA) and 439–536 (APST…TVPS). N-linked (GlcNAc...) asparagine glycans are attached at residues Asn-340 and Asn-407. A helical transmembrane segment spans residues 548–569 (LLVSVAGSIVLVVILIAAFVIS). At 570-986 (RRRSKYSKAK…QQIQGRMVPV (417 aa)) the chain is on the cytoplasmic side. Phosphotyrosine; by autocatalysis is present on residues Tyr-595 and Tyr-601. One can recognise a Protein kinase domain in the interval 620-881 (IKIEKVIGVG…QIVSMLDKLI (262 aa)). ATP contacts are provided by residues 626 to 634 (IGVGEFGEV) and Lys-652. Residue Asp-745 is the Proton acceptor of the active site. Phosphotyrosine; by autocatalysis occurs at positions 778 and 928. Residues 911-975 (SQVASVLDWL…LSSVQGMRTQ (65 aa)) form the SAM domain. The short motif at 984-986 (VPV) is the PDZ-binding element.

It belongs to the protein kinase superfamily. Tyr protein kinase family. Ephrin receptor subfamily.

The protein resides in the cell membrane. Its subcellular location is the early endosome. The catalysed reaction is L-tyrosyl-[protein] + ATP = O-phospho-L-tyrosyl-[protein] + ADP + H(+). In terms of biological role, receptor tyrosine kinase which binds membrane-bound ephrin family ligands residing on adjacent cells, leading to contact-dependent bidirectional signaling into neighboring cells. The signaling pathway downstream of the receptor is referred to as forward signaling while the signaling pathway downstream of the ephrin ligand is referred to as reverse signaling. Highly promiscuous, it has the unique property among Eph receptors to bind and to be physiologically activated by both GPI-anchored ephrin-A and transmembrane ephrin-B ligands including EFNA1 and EFNB3. Upon activation by ephrin ligands, modulates cell morphology and integrin-dependent cell adhesion through regulation of the Rac, Rap and Rho GTPases activity. Plays an important role in the development of the nervous system controlling different steps of axonal guidance including the establishment of the corticospinal projections. This Xenopus laevis (African clawed frog) protein is Ephrin type-A receptor 4-A (epha4-a).